A 129-amino-acid polypeptide reads, in one-letter code: UPF0102 protein Cpar_0015 (129 aa).

It belongs to the UPF0102 family.

In Chlorobaculum parvum (strain DSM 263 / NCIMB 8327) (Chlorobium vibrioforme subsp. thiosulfatophilum), this protein is UPF0102 protein Cpar_0015.